The chain runs to 126 residues: Small ribosomal subunit protein uS13c (126 aa).

Residues 95-126 are disordered; it reads GLPLRGQNTRTNARTKRGIKKTMAGKKKAPRK. The segment covering 107-126 has biased composition (basic residues); the sequence is ARTKRGIKKTMAGKKKAPRK.

Belongs to the universal ribosomal protein uS13 family. Part of the 30S ribosomal subunit.

It is found in the plastid. Its subcellular location is the chloroplast. Functionally, located at the top of the head of the 30S subunit, it contacts several helices of the 16S rRNA. The protein is Small ribosomal subunit protein uS13c of Gracilaria tenuistipitata var. liui (Red alga).